The sequence spans 619 residues: Vitamin B12 transporter BtuB (619 aa).

Positions 1–25 (MINKKRLLLSTVSIMVISGWNQASA) are cleaved as a signal peptide. Positions 31–38 (DSLVVTAS) match the TonB box motif. Residues 43–157 (PISSILAPYT…IGGVINIITT (115 aa)) form the TBDR plug domain. Residues L88, S90, and 115-116 (IS) each bind cyanocob(III)alamin. Positions 160–619 (KLGTSLNVGI…EYYLTGSYNF (460 aa)) constitute a TBDR beta-barrel domain. Beta stranded transmembrane passes span 163–170 (TSLNVGIG), 174–183 (YQTYDGATQQ), and 189–200 (TVLTAAANYTYT). Ca(2+) is bound by residues D204, Q216, D218, and D220. The next 2 membrane-spanning stretches (beta stranded) occupy residues 222-232 (FMSKMLWLGVD) and 237-253 (EQVSGFVRAYGYNNRTS). Residues Y254 and D255 each contribute to the Ca(2+) site. A256 contributes to the cyanocob(III)alamin binding site. Ca(2+) is bound at residue D268. Transmembrane regions (beta stranded) follow at residues 270–284 (RELYSRHYDMGVRFN), 286–303 (GIYSSQLITSYSHTKDYN), 316–332 (SLNDSEQYNLQWGNTFQ), 335–344 (QGIVSTGVDF), 360–376 (KTVRNTGMYLTAQQQLK), 378–388 (FILEGAIRSDK), 392–407 (AGWNTTWQASLGWEFI), 410–424 (YRLIASYGTAFKAPT), 441–450 (ESKQWEGGIE), 456–465 (LTWRMTVYRN), 478–495 (YYNIGKAKIKGVEWTGLI), 499–514 (MFQHQLTIQYIDPRNS), 522–534 (RRAKQQVKYQLDW), 540–556 (DWGLTYQYLGRRYDKDF), 563–577 (RVKLGGVSFWDLTVS), 590–601 (IANLLDKDYETV), and 607–619 (PGREYYLTGSYNF). S316 is a cyanocob(III)alamin binding site. Cyanocob(III)alamin is bound at residue R522. The short motif at 602–619 (YGYRIPGREYYLTGSYNF) is the TonB C-terminal box element.

Belongs to the TonB-dependent receptor family. BtuB (TC 1.B.14.3.1) subfamily.

The protein resides in the cell outer membrane. Its function is as follows. Involved in the active translocation of vitamin B12 (cyanocobalamin) across the outer membrane to the periplasmic space. It derives its energy for transport by interacting with the trans-periplasmic membrane protein TonB. The chain is Vitamin B12 transporter BtuB from Photorhabdus laumondii subsp. laumondii (strain DSM 15139 / CIP 105565 / TT01) (Photorhabdus luminescens subsp. laumondii).